The chain runs to 79 residues: Beta-hexatoxin-Mg1a (79 aa).

Positions 1–20 (MKAPATTLILVMSLISVLWA) are cleaved as a signal peptide. Residues 21–50 (TPDLEEGDLLAELGDLIATDDEYPMKPEER) constitute a propeptide that is removed on maturation. Disulfide bonds link cysteine 52/cysteine 66, cysteine 59/cysteine 71, and cysteine 65/cysteine 76.

This sequence belongs to the neurotoxin 15 family. 01 (magi-5) subfamily. As to expression, expressed by the venom gland.

It localises to the secreted. Functionally, insect and vertebrate active toxin. Binds to site 4 of mammalian voltage-gated sodium channels and shifts the activation voltage of the mammalian Nav1.2a/SCN2A channel to more hyperpolarized voltages, whereas the insect channel, DmNav1 (para), is not affected. Competes for binding at site 3 of the insect sodium channel. Causes temporary paralysis when injected into lepidopteran larvae at 8.6 nmol/g. A low intracranial injection dose into mice causes lacrimation, closure of the eyes and sweating. A high injection dose causes extensive lacrimation and death. This is Beta-hexatoxin-Mg1a from Macrothele gigas (Japanese funnel web spider).